Consider the following 356-residue polypeptide: V-type proton ATPase subunit d (356 aa).

It belongs to the V-ATPase V0D/AC39 subunit family. In terms of assembly, V-ATPase is a heteromultimeric enzyme composed of a peripheral catalytic V1 complex (components A to H) attached to an integral membrane V0 proton pore complex (components: a, c, c', c'' and d).

Its function is as follows. Subunit of the integral membrane V0 complex of vacuolar ATPase. Vacuolar ATPase is responsible for acidifying a variety of intracellular compartments in eukaryotic cells, thus providing most of the energy required for transport processes in the vacuolar system. This chain is V-type proton ATPase subunit d (vatD-1), found in Dictyostelium discoideum (Social amoeba).